The sequence spans 875 residues: Phosphoenolpyruvate carboxylase (875 aa).

Residues H137 and K542 contribute to the active site.

Belongs to the PEPCase type 1 family. Requires Mg(2+) as cofactor.

The catalysed reaction is oxaloacetate + phosphate = phosphoenolpyruvate + hydrogencarbonate. Forms oxaloacetate, a four-carbon dicarboxylic acid source for the tricarboxylic acid cycle. The sequence is that of Phosphoenolpyruvate carboxylase from Pseudomonas putida (strain GB-1).